The chain runs to 382 residues: uncharacterized protein (382 aa).

Helical transmembrane passes span 14-34 (GLLLLTLAIAVLNTLVPLWLA), 45-65 (VVSSSYFTGNLVGTLLTGYVI), 79-99 (FIFAAGCAGLGLMIGFWSWLA), 102-122 (FVAGVGCAMIWVVVESALMCS), 131-151 (LLAAYMMVYYVGTFLGQLLVS), 157-177 (LMSVLPWVTGLTLAGILPLLF), 204-224 (LGVNGCIISGIVLGSLYGLMP), 235-255 (ASIGFWMAVLVSAGILGQWPI), 270-290 (VQVFVVILGSIAMLSQAAMAP), 291-311 (ALFILGAAGFTLYPVAMAWAC), 325-345 (ALLLSYTVGSLLGPSFTAMLM), and 348-368 (FSDNLLFIMIASVSFIYLLML).

This sequence belongs to the major facilitator superfamily. YcaD (TC 2.A.1.26) family.

It is found in the cell inner membrane. This is an uncharacterized protein from Escherichia coli O7:K1 (strain IAI39 / ExPEC).